Consider the following 329-residue polypeptide: Tetraacyldisaccharide 4'-kinase (329 aa).

58 to 65 contacts ATP; the sequence is SVGGTGKT.

It belongs to the LpxK family.

It carries out the reaction a lipid A disaccharide + ATP = a lipid IVA + ADP + H(+). It functions in the pathway glycolipid biosynthesis; lipid IV(A) biosynthesis; lipid IV(A) from (3R)-3-hydroxytetradecanoyl-[acyl-carrier-protein] and UDP-N-acetyl-alpha-D-glucosamine: step 6/6. In terms of biological role, transfers the gamma-phosphate of ATP to the 4'-position of a tetraacyldisaccharide 1-phosphate intermediate (termed DS-1-P) to form tetraacyldisaccharide 1,4'-bis-phosphate (lipid IVA). The protein is Tetraacyldisaccharide 4'-kinase of Idiomarina loihiensis (strain ATCC BAA-735 / DSM 15497 / L2-TR).